Here is a 262-residue protein sequence, read N- to C-terminus: 3-methyl-2-oxobutanoate hydroxymethyltransferase (262 aa).

Positions 42 and 81 each coordinate Mg(2+). 3-methyl-2-oxobutanoate is bound by residues aspartate 42–serine 43, aspartate 81, and lysine 110. Glutamate 112 provides a ligand contact to Mg(2+). Glutamate 180 acts as the Proton acceptor in catalysis.

This sequence belongs to the PanB family. Homodecamer; pentamer of dimers. Requires Mg(2+) as cofactor.

It localises to the cytoplasm. It carries out the reaction 3-methyl-2-oxobutanoate + (6R)-5,10-methylene-5,6,7,8-tetrahydrofolate + H2O = 2-dehydropantoate + (6S)-5,6,7,8-tetrahydrofolate. It participates in cofactor biosynthesis; (R)-pantothenate biosynthesis; (R)-pantoate from 3-methyl-2-oxobutanoate: step 1/2. In terms of biological role, catalyzes the reversible reaction in which hydroxymethyl group from 5,10-methylenetetrahydrofolate is transferred onto alpha-ketoisovalerate to form ketopantoate. In Legionella pneumophila (strain Corby), this protein is 3-methyl-2-oxobutanoate hydroxymethyltransferase.